The sequence spans 279 residues: Diaminopimelate epimerase (279 aa).

Positions 11 and 72 each coordinate substrate. Cysteine 81 functions as the Proton donor in the catalytic mechanism. Substrate-binding positions include 82 to 83, asparagine 187, and 205 to 206; these read GN and ER. The active-site Proton acceptor is cysteine 215. Position 216–217 (216–217) interacts with substrate; the sequence is GT.

It belongs to the diaminopimelate epimerase family. In terms of assembly, homodimer.

The protein resides in the cytoplasm. It carries out the reaction (2S,6S)-2,6-diaminopimelate = meso-2,6-diaminopimelate. Its pathway is amino-acid biosynthesis; L-lysine biosynthesis via DAP pathway; DL-2,6-diaminopimelate from LL-2,6-diaminopimelate: step 1/1. Functionally, catalyzes the stereoinversion of LL-2,6-diaminopimelate (L,L-DAP) to meso-diaminopimelate (meso-DAP), a precursor of L-lysine and an essential component of the bacterial peptidoglycan. The sequence is that of Diaminopimelate epimerase from Aquifex aeolicus (strain VF5).